The following is a 560-amino-acid chain: Cytosolic purine 5'-nucleotidase (560 aa).

Catalysis depends on D52, which acts as the Nucleophile. IMP is bound by residues D52 and D54. Mg(2+)-binding residues include D52 and D54. D54 functions as the Proton donor in the catalytic mechanism. R144 and N154 together coordinate ATP. R202, D206, K215, T249, N250, S251, and K292 together coordinate IMP. D351 is a binding site for Mg(2+). S418 carries the post-translational modification Phosphoserine. Positions 453 and 456 each coordinate ATP. A phosphoserine mark is found at S502, S511, and S527. The disordered stretch occupies residues 541–560; it reads PQEITHCHDEDDDEEEEEEE. The required for tetramer assembly stretch occupies residues 548–560; that stretch reads HDEDDDEEEEEEE. Residues 550-560 show a composition bias toward acidic residues; sequence EDDDEEEEEEE.

This sequence belongs to the 5'(3')-deoxyribonucleotidase family. As to quaternary structure, homotetramer. Requires Mg(2+) as cofactor.

Its subcellular location is the cytoplasm. It localises to the cytosol. It catalyses the reaction a ribonucleoside 5'-phosphate + H2O = a ribonucleoside + phosphate. The catalysed reaction is a 2'-deoxyribonucleoside + a ribonucleoside 5'-phosphate = a ribonucleoside + a 2'-deoxyribonucleoside 5'-phosphate. The enzyme catalyses IMP + H2O = inosine + phosphate. It carries out the reaction GMP + H2O = guanosine + phosphate. It catalyses the reaction dIMP + H2O = 2'-deoxyinosine + phosphate. The catalysed reaction is dGMP + H2O = 2'-deoxyguanosine + phosphate. The enzyme catalyses XMP + H2O = xanthosine + phosphate. It carries out the reaction inosine + GMP = guanosine + IMP. It catalyses the reaction dGMP + inosine = 2'-deoxyguanosine + IMP. The catalysed reaction is dIMP + inosine = 2'-deoxyinosine + IMP. The enzyme catalyses inosine + UMP = uridine + IMP. It carries out the reaction inosine + CMP = cytidine + IMP. It catalyses the reaction inosine + AMP = IMP + adenosine. Its activity is regulated as follows. Allosterically activated by various compounds including ATP, 2,3-BPG/2,3-Bisphosphoglyceric acid and Ap4A/P1,P4-bis(5'-adenosyl) tetraphosphate. Binding of an allosteric activator is a prerequisiste to magnesium and substrate binding. Inhibited by inorganic phosphate. In terms of biological role, broad specificity cytosolic 5'-nucleotidase that catalyzes the dephosphorylation of 6-hydroxypurine nucleoside 5'-monophosphates. In addition, possesses a phosphotransferase activity by which it can transfer a phosphate from a donor nucleoside monophosphate to an acceptor nucleoside, preferably inosine, deoxyinosine and guanosine. Has the highest activities for IMP and GMP followed by dIMP, dGMP and XMP. Could also catalyze the transfer of phosphates from pyrimidine monophosphates but with lower efficiency. Through these activities regulates the purine nucleoside/nucleotide pools within the cell. This Rattus norvegicus (Rat) protein is Cytosolic purine 5'-nucleotidase.